A 421-amino-acid polypeptide reads, in one-letter code: uncharacterized protein (421 aa).

The TRAM domain maps to 14–72 (DLTKGDTITVEVTRPAHGGEGIAHHGGRVIFVRGGFPGDDVDVEITQVKKRFARGFVVQ). S-adenosyl-L-methionine-binding residues include glutamine 250, tyrosine 286, glutamate 308, and aspartate 349. The active-site Nucleophile is cysteine 376.

It belongs to the class I-like SAM-binding methyltransferase superfamily. RNA M5U methyltransferase family.

This is an uncharacterized protein from Corynebacterium efficiens (strain DSM 44549 / YS-314 / AJ 12310 / JCM 11189 / NBRC 100395).